A 378-amino-acid chain; its full sequence is Protein RecA (378 aa).

66-73 (GPESSGKT) contributes to the ATP binding site. Residues 333 to 378 (PDAAKAEAATDAAAAADTAGTDDAAKSVPAPASKTAKATKATAVKS) are disordered. Residues 338–378 (AEAATDAAAAADTAGTDDAAKSVPAPASKTAKATKATAVKS) show a composition bias toward low complexity.

Belongs to the RecA family.

The protein resides in the cytoplasm. Its function is as follows. Can catalyze the hydrolysis of ATP in the presence of single-stranded DNA, the ATP-dependent uptake of single-stranded DNA by duplex DNA, and the ATP-dependent hybridization of homologous single-stranded DNAs. It interacts with LexA causing its activation and leading to its autocatalytic cleavage. This chain is Protein RecA, found in Streptomyces venezuelae (strain ATCC 10712 / CBS 650.69 / DSM 40230 / JCM 4526 / NBRC 13096 / PD 04745).